The following is a 138-amino-acid chain: Protein SPMIP3 (138 aa).

The sequence is that of Protein SPMIP3 (SPMIP3) from Bos taurus (Bovine).